The primary structure comprises 85 residues: Acyl carrier protein ScoB (85 aa).

The Carrier domain occupies 1–77; the sequence is MPAPLTLDGF…QWWQLLSARQ (77 aa). At S38 the chain carries O-(pantetheine 4'-phosphoryl)serine.

It belongs to the acyl carrier protein (ACP) family. Requires pantetheine 4'-phosphate as cofactor.

It participates in lipid metabolism; fatty acid metabolism. In terms of biological role, acyl-carrier protein (ACP) involved in the biosynthesis of a unique class of isonitrile lipopeptides (INLPs). Is the dedicated ACP for the loading of activated acyl groups catalyzed by ScoC. The polypeptide is Acyl carrier protein ScoB (Streptomyces coeruleorubidus).